The primary structure comprises 1687 residues: Muscle calcium channel subunit alpha-1 (1687 aa).

Residues 1 to 33 are disordered; the sequence is MDDAVCPTETDNVQNKQKATTPKRTQRRGGKQQ. Residues 1–61 are Cytoplasmic-facing; it reads MDDAVCPTET…IFCIKIVDSK (61 aa). Residues 9–23 are compositionally biased toward polar residues; it reads ETDNVQNKQKATTPK. One copy of the I repeat lies at 48 to 330; it reads NPLRIFCIKI…LILGVLSGEF (283 aa). Residues 62 to 80 traverse the membrane as a helical segment; the sequence is LFEYFILLTIFANCVALAV. Topologically, residues 81-99 are extracellular; sequence YTPYPSGDSNITNQMLEKI. N-linked (GlcNAc...) asparagine glycosylation is present at Asn90. A helical membrane pass occupies residues 100-117; it reads EYIFLVIFTSECVMKIIA. The Cytoplasmic segment spans residues 118-130; the sequence is YGFVLHTGSYLRN. Residues 131-145 form a helical membrane-spanning segment; the sequence is GWNFLDFFIVVIGMI. Residues 146-157 lie on the Extracellular side of the membrane; the sequence is STALSNLVKEGF. A helical transmembrane segment spans residues 158-176; that stretch reads DVKALRAFRVLRPLRLVSG. The Cytoplasmic portion of the chain corresponds to 177 to 196; the sequence is VPSLQVVLNSILKAMIPLLH. The helical transmembrane segment at 197–216 threads the bilayer; sequence IALLVLFVIIIYAIIGLELF. At 217–302 the chain is on the extracellular side; it reads SGKLHKTCRH…SIQDAMGSSW (86 aa). Glu285 is a binding site for Ca(2+). A helical membrane pass occupies residues 303 to 327; that stretch reads EWIYFVSMVILGAFFVMNLILGVLS. At 328–434 the chain is on the cytoplasmic side; it reads GEFSKERTKA…RACRKAVKSQ (107 aa). One copy of the II repeat lies at 420–667; sequence NRRIRRACRK…VFLAIAVDNL (248 aa). A helical transmembrane segment spans residues 435–454; the sequence is AFYWLIILLVFLNTGVLATE. Residues 455-467 lie on the Extracellular side of the membrane; it reads HYRQPIWLDQFQE. Residues 468–487 form a helical membrane-spanning segment; it reads YTNIFFIALFTCEMILKMYS. Topologically, residues 488 to 496 are cytoplasmic; it reads LGFQGYFVS. A helical transmembrane segment spans residues 497 to 515; it reads LFNRFDCFVVIGSISEMVL. Residues 516–525 are Extracellular-facing; sequence TSSELMAPLG. A helical transmembrane segment spans residues 526-544; that stretch reads VSVLRCVRLLRVFKVTKYW. The Cytoplasmic segment spans residues 545–563; the sequence is HSLSNLVASLLNSIQSIAS. A helical transmembrane segment spans residues 564–583; it reads LLLLLFLFIVIFGLLGMQVF. At 584–639 the chain is on the extracellular side; it reads GGRFTFKPEEEKPRSNFDSFYQSLLTVFQILTGEDWNVVMYDGIRAYGGVFSFGIV. Position 617 (Glu617) interacts with Ca(2+). Residues 640–664 form a helical membrane-spanning segment; the sequence is ACIYYIILFICGNYILLNVFLAIAV. The Cytoplasmic portion of the chain corresponds to 665 to 785; that stretch reads DNLADADSLS…TNRFRIFCHR (121 aa). One copy of the III repeat lies at 777–1059; the sequence is NRFRIFCHRL…IFVGFVIVTF (283 aa). A helical membrane pass occupies residues 786–809; the sequence is LCNHSNFGNFILCCIMFSSAMLAA. Residues 810–826 are Extracellular-facing; that stretch reads ENPLKADASRNIVLNKF. Residues 827-846 form a helical membrane-spanning segment; it reads DYFFTAVFTIELVLKLISYG. The Cytoplasmic portion of the chain corresponds to 847–854; that stretch reads FVLHDGAF. Residues 855 to 877 traverse the membrane as a helical segment; that stretch reads CRSAFNLLDLLVVCVSLISIFFN. The Extracellular portion of the chain corresponds to 878–885; sequence SNAISVVK. A helical membrane pass occupies residues 886 to 900; it reads ILRVLRVLRPLRAIN. Residues 901–921 are Cytoplasmic-facing; the sequence is RAKGLKHVVQCVIVAVKTIGN. A helical transmembrane segment spans residues 922–941; it reads IVLVTCLLQFMFAVIGVQLF. Over 942-1030 the chain is Extracellular; the sequence is KGKFFSCSDG…NGGPIYNFRP (89 aa). The segment at 979–1068 is dihydropyridine binding; sequence REWKNNKFHF…FQNEGEQEYK (90 aa). Ca(2+) is bound at residue Glu1005. A helical membrane pass occupies residues 1031–1055; that stretch reads IVAAYYIIYIIIIAFFMVNIFVGFV. Residues 1056 to 1110 lie on the Cytoplasmic side of the membrane; the sequence is IVTFQNEGEQEYKNCELDKNQRNCIEFALKAKPVRRYIPKHSIQYKVWWFVTSSS. The stretch at 1096-1370 is one IV repeat; that stretch reads HSIQYKVWWF…LFVAVIMDNF (275 aa). A helical transmembrane segment spans residues 1111-1129; the sequence is FEYSIFVLIMINTVTLAMK. The Extracellular portion of the chain corresponds to 1130–1143; sequence FYKQPEYYSEILDA. The helical transmembrane segment at 1144–1163 threads the bilayer; it reads LNMIFTAVFSLEFIFKLAAF. Residues 1164 to 1172 are Cytoplasmic-facing; it reads RFKNYFGDA. The chain crosses the membrane as a helical span at residues 1173–1191; that stretch reads WNTFDFIIVLGSFIDIVYS. Over 1192 to 1219 the chain is Extracellular; the sequence is EIKTKEQALATCDGQSCNKAKGGSTLIS. Residues 1220–1238 form a helical membrane-spanning segment; that stretch reads INFFRLFRVMRLVKLLSKG. Topologically, residues 1239 to 1257 are cytoplasmic; the sequence is EGIRTLLWTFIKSFQALPY. Residues 1258–1277 traverse the membrane as a helical segment; that stretch reads VALLIVMLFFIYAVIGMQVF. The Extracellular segment spans residues 1278 to 1343; it reads GKIMLEEGTS…AVNNCGSSIA (66 aa). The tract at residues 1327–1389 is dihydropyridine binding; sequence KCDPESDAVN…LGPHHLDEFI (63 aa). Positions 1337–1378 are phenylalkylamine binding; sequence NCGSSIAFPYFISFYVLCSFLIINLFVAVIMDNFDYLTRDWS. The helical transmembrane segment at 1344–1362 threads the bilayer; it reads FPYFISFYVLCSFLIINLF. Topologically, residues 1363-1687 are cytoplasmic; the sequence is VAVIMDNFDY…PKSKDKDEEF (325 aa).

The protein belongs to the calcium channel alpha-1 subunit (TC 1.A.1.11) family. In terms of tissue distribution, predominantly expressed in the larval body wall musculature. In adults, highest expression in thorax followed by head and at a lower extent by abdomen.

It localises to the membrane. Its function is as follows. Voltage-sensitive calcium channels (VSCC) mediate the entry of calcium ions into excitable cells and are also involved in a variety of calcium-dependent processes, including muscle contraction, hormone or neurotransmitter release, gene expression, cell motility, cell division and cell death. MDL-alpha1 encodes a dihydropyridine- and diltiazem-sensitive current in larval body wall muscle. This Musca domestica (House fly) protein is Muscle calcium channel subunit alpha-1.